We begin with the raw amino-acid sequence, 297 residues long: Small ribosomal subunit biogenesis GTPase RsgA (297 aa).

The CP-type G domain occupies 65–223 (TNEIGRPAVA…IADTPGFSAI (159 aa)). Residues 114–117 (SKAD) and 166–174 (GQSGAGKST) contribute to the GTP site. Zn(2+) contacts are provided by C247, C252, H254, and C260.

This sequence belongs to the TRAFAC class YlqF/YawG GTPase family. RsgA subfamily. In terms of assembly, monomer. Associates with 30S ribosomal subunit, binds 16S rRNA. The cofactor is Zn(2+).

It is found in the cytoplasm. One of several proteins that assist in the late maturation steps of the functional core of the 30S ribosomal subunit. Helps release RbfA from mature subunits. May play a role in the assembly of ribosomal proteins into the subunit. Circularly permuted GTPase that catalyzes slow GTP hydrolysis, GTPase activity is stimulated by the 30S ribosomal subunit. The sequence is that of Small ribosomal subunit biogenesis GTPase RsgA from Lactobacillus gasseri (strain ATCC 33323 / DSM 20243 / BCRC 14619 / CIP 102991 / JCM 1131 / KCTC 3163 / NCIMB 11718 / NCTC 13722 / AM63).